Here is a 137-residue protein sequence, read N- to C-terminus: Large ribosomal subunit protein uL16 (137 aa).

This sequence belongs to the universal ribosomal protein uL16 family. As to quaternary structure, part of the 50S ribosomal subunit.

Its function is as follows. Binds 23S rRNA and is also seen to make contacts with the A and possibly P site tRNAs. This chain is Large ribosomal subunit protein uL16, found in Bradyrhizobium sp. (strain ORS 278).